The following is a 310-amino-acid chain: Methionyl-tRNA formyltransferase (310 aa).

Residue 110–113 participates in (6S)-5,6,7,8-tetrahydrofolate binding; the sequence is SLLP.

It belongs to the Fmt family.

It catalyses the reaction L-methionyl-tRNA(fMet) + (6R)-10-formyltetrahydrofolate = N-formyl-L-methionyl-tRNA(fMet) + (6S)-5,6,7,8-tetrahydrofolate + H(+). Functionally, attaches a formyl group to the free amino group of methionyl-tRNA(fMet). The formyl group appears to play a dual role in the initiator identity of N-formylmethionyl-tRNA by promoting its recognition by IF2 and preventing the misappropriation of this tRNA by the elongation apparatus. This chain is Methionyl-tRNA formyltransferase, found in Streptomyces griseus subsp. griseus (strain JCM 4626 / CBS 651.72 / NBRC 13350 / KCC S-0626 / ISP 5235).